A 303-amino-acid chain; its full sequence is Dihydroorotate dehydrogenase B (NAD(+)), catalytic subunit (303 aa).

Residues Ser21 and 45 to 46 (KG) each bind FMN. Substrate is bound by residues Lys45 and 69–73 (NAVGL). Residues Asn99 and Asn127 each coordinate FMN. A substrate-binding site is contributed by Asn127. The active-site Nucleophile is Cys130. Positions 165 and 191 each coordinate FMN. 192–193 (NT) lines the substrate pocket. FMN-binding positions include Gly217, 243-244 (GG), and 265-266 (GT).

Belongs to the dihydroorotate dehydrogenase family. Type 1 subfamily. As to quaternary structure, heterotetramer of 2 PyrK and 2 PyrD type B subunits. FMN is required as a cofactor.

Its subcellular location is the cytoplasm. It carries out the reaction (S)-dihydroorotate + NAD(+) = orotate + NADH + H(+). It functions in the pathway pyrimidine metabolism; UMP biosynthesis via de novo pathway; orotate from (S)-dihydroorotate (NAD(+) route): step 1/1. Its function is as follows. Catalyzes the conversion of dihydroorotate to orotate with NAD(+) as electron acceptor. The polypeptide is Dihydroorotate dehydrogenase B (NAD(+)), catalytic subunit (pyrD) (Phocaeicola vulgatus (strain ATCC 8482 / DSM 1447 / JCM 5826 / CCUG 4940 / NBRC 14291 / NCTC 11154) (Bacteroides vulgatus)).